Reading from the N-terminus, the 395-residue chain is Ribosomal RNA small subunit methyltransferase H (395 aa).

Residues Gly101 to His103, Asp120, Tyr147, Asp171, and Gln178 contribute to the S-adenosyl-L-methionine site.

This sequence belongs to the methyltransferase superfamily. RsmH family.

It is found in the cytoplasm. It catalyses the reaction cytidine(1402) in 16S rRNA + S-adenosyl-L-methionine = N(4)-methylcytidine(1402) in 16S rRNA + S-adenosyl-L-homocysteine + H(+). Its function is as follows. Specifically methylates the N4 position of cytidine in position 1402 (C1402) of 16S rRNA. This is Ribosomal RNA small subunit methyltransferase H from Mycobacterium ulcerans (strain Agy99).